The following is a 108-amino-acid chain: FK506-binding protein 1 (108 aa).

Residues 20–108 (GDAVTIHYVG…VFDVELLGIN (89 aa)) form the PPIase FKBP-type domain.

Belongs to the FKBP-type PPIase family. FKBP1 subfamily.

Its subcellular location is the cytoplasm. The enzyme catalyses [protein]-peptidylproline (omega=180) = [protein]-peptidylproline (omega=0). Its activity is regulated as follows. Inhibited by both FK506 and rapamycin. Functionally, PPIases accelerate the folding of proteins. It catalyzes the cis-trans isomerization of proline imidic peptide bonds in oligopeptides. The sequence is that of FK506-binding protein 1 (FPR1) from Yarrowia lipolytica (strain CLIB 122 / E 150) (Yeast).